Consider the following 800-residue polypeptide: MFKLFAALRKERLWDFTGGIHPPEMKQISSEIPLRRIPLPNLLIIPLQQHLGPEGELLVKVGERVLKGQPLTRGNGRTLPVHASTSGTISAISRQVTAHPSGLPELCISLVPDQQDCWGERHPLPDYRAMTPPALIDHIHQAGIAGLGGAGFPTAAKLNGGADRINTLIINAAECEPYITADDRLMREHAAEIVSGCAILSHILAPERVLIGIEDNKPQAIAALRHALQCHEKIQLRVIPTKYPSGGAKQLIKILTGMEVPHGRHSASIGVLMQNVATVYAIKRAVIDGEPLIERVVTLTGEQMHRPGNVWAAIGTPVKHLLQNGGLIAQNKHPMVIMGGPLMGFTLSRLGVPVVKITNCILTPSRDEFSVPQAEQPCIRCGACADVCPARLLPQQLYWFSQGKEHDKARGYHLQECIECGACAYVCPSNIPLVQYYRQEKAEIRALDDEARRAAEAKARFEARLARLEREKAAREQRHKQAAVSVSNSDRETIQAALQRINLRKAGQTDDVAAVNDPRQAALAAAIARAKAKQAGATPAPAATDSDAAAPAPQDDPRKAAIAAAITRAKAKQAGATPAPAATNSDAVAPAPQDDPRKAAIARAKAKQAGATPAPAATNSDAVAPAPQDDPRKAAIAAAIARAKAKAKQAGATPAPATTDSDAADPAPQDDPRKAAIAAAIARAKAKQAASGHATTEPVTVQENTDGARRQIHRATLQAAYASGAGADLTAAAEGATPESDRQAAIATAIARVKARQTLVNGEVPKPVATSTPTDTQKAAVAAAIARIKAKQASAAPSEE.

4Fe-4S ferredoxin-type domains lie at D367–Y398 and K408–Y437. The [4Fe-4S] cluster site is built by C378, C381, C384, C388, C417, C420, C423, and C427. 5 stretches are compositionally biased toward low complexity: residues G536 to P553, A571 to T583, A599 to A617, A647 to A667, and A675 to A690. Disordered stretches follow at residues G536–R558, A571–P631, and A647–D706. Residues H693–T705 are compositionally biased toward polar residues.

The protein belongs to the 4Fe4S bacterial-type ferredoxin family. RnfC subfamily. In terms of assembly, the complex is composed of six subunits: RnfA, RnfB, RnfC, RnfD, RnfE and RnfG. Requires [4Fe-4S] cluster as cofactor.

The protein localises to the cell inner membrane. Part of a membrane-bound complex that couples electron transfer with translocation of ions across the membrane. The polypeptide is Ion-translocating oxidoreductase complex subunit C (Edwardsiella ictaluri (strain 93-146)).